A 521-amino-acid polypeptide reads, in one-letter code: GMP synthase [glutamine-hydrolyzing] (521 aa).

Residues 5 to 197 enclose the Glutamine amidotransferase type-1 domain; sequence KILILDFGSQ…VLDICGAQPG (193 aa). Cysteine 81 serves as the catalytic Nucleophile. Active-site residues include histidine 171 and glutamate 173. The GMPS ATP-PPase domain maps to 198-390; sequence WTMPNYIEEA…LGLPREMVYR (193 aa). Position 225–231 (225–231) interacts with ATP; it reads SGGVDSS.

Homodimer.

It catalyses the reaction XMP + L-glutamine + ATP + H2O = GMP + L-glutamate + AMP + diphosphate + 2 H(+). Its pathway is purine metabolism; GMP biosynthesis; GMP from XMP (L-Gln route): step 1/1. Functionally, catalyzes the synthesis of GMP from XMP. The chain is GMP synthase [glutamine-hydrolyzing] from Neisseria gonorrhoeae (strain ATCC 700825 / FA 1090).